Reading from the N-terminus, the 173-residue chain is Alpha-crystallin A chain (173 aa).

Met1 is subject to N-acetylmethionine. The tract at residues 1 to 63 (MDIAIQHPWF…RTVLDSGISE (63 aa)) is required for complex formation with BFSP1 and BFSP2. Gln6 is modified (deamidated glutamine; partial). Ser45 is subject to Phosphoserine. Deamidated glutamine; partial is present on Gln50. The region spanning 52-162 (LFRTVLDSGI…GHSERAIPVS (111 aa)) is the sHSP domain. Lys70 is modified (N6-acetyllysine). Gln90 is subject to Deamidated glutamine; partial. Position 99 is an N6-acetyllysine (Lys99). Residue His100 participates in Zn(2+) binding. Deamidated asparagine; partial is present on Asn101. Residues Glu102 and His107 each contribute to the Zn(2+) site. Ser122 is subject to Phosphoserine. Asn123 bears the Deamidated asparagine; partial mark. The disordered stretch occupies residues 144 to 173 (PKVPSGVDAGHSERAIPVSREEKPSSAPSS). Basic and acidic residues predominate over residues 153–167 (GHSERAIPVSREEKP). Position 154 (His154) interacts with Zn(2+). O-linked (GlcNAc) serine glycosylation occurs at Ser162.

The protein belongs to the small heat shock protein (HSP20) family. In terms of assembly, heteromer composed of three CRYAA and one CRYAB subunits. Inter-subunit bridging via zinc ions enhances stability, which is crucial as there is no protein turn over in the lens. Can also form homodimers and homotetramers (dimers of dimers) which serve as the building blocks of homooligomers. Within homooligomers, the zinc-binding motif is created from residues of 3 different molecules. His-100 and Glu-102 from one molecule are ligands of the zinc ion, and His-107 and His-154 residues from additional molecules complete the site with tetrahedral coordination geometry. Part of a complex required for lens intermediate filament formation composed of BFSP1, BFSP2 and CRYAA. Acetylation at Lys-70 may increase chaperone activity. In terms of processing, undergoes age-dependent proteolytical cleavage at the C-terminus.

The protein resides in the cytoplasm. Its subcellular location is the nucleus. Functionally, contributes to the transparency and refractive index of the lens. Acts as a chaperone, preventing aggregation of various proteins under a wide range of stress conditions. Required for the correct formation of lens intermediate filaments as part of a complex composed of BFSP1, BFSP2 and CRYAA. The chain is Alpha-crystallin A chain (CRYAA) from Pteropus poliocephalus (Grey-headed flying fox).